The sequence spans 176 residues: Ribosome maturation factor RimM (176 aa).

One can recognise a PRC barrel domain in the interval 100-173 (EGEFHLLDLV…WLRLTPPPGL (74 aa)).

It belongs to the RimM family. In terms of assembly, binds ribosomal protein uS19.

The protein localises to the cytoplasm. An accessory protein needed during the final step in the assembly of 30S ribosomal subunit, possibly for assembly of the head region. Essential for efficient processing of 16S rRNA. May be needed both before and after RbfA during the maturation of 16S rRNA. It has affinity for free ribosomal 30S subunits but not for 70S ribosomes. This chain is Ribosome maturation factor RimM, found in Prochlorococcus marinus (strain MIT 9303).